Reading from the N-terminus, the 415-residue chain is Queuine tRNA-ribosyltransferase accessory subunit 2 (415 aa).

Zn(2+) contacts are provided by cysteine 351, cysteine 353, cysteine 356, and histidine 382.

It belongs to the queuine tRNA-ribosyltransferase family. QTRT2 subfamily. In terms of assembly, heterodimer of a catalytic subunit QTRT1 and an accessory subunit QTRT2. The cofactor is Zn(2+).

It localises to the cytoplasm. Its subcellular location is the mitochondrion outer membrane. In terms of biological role, non-catalytic subunit of the queuine tRNA-ribosyltransferase (TGT) that catalyzes the base-exchange of a guanine (G) residue with queuine (Q) at position 34 (anticodon wobble position) in tRNAs with GU(N) anticodons (tRNA-Asp, -Asn, -His and -Tyr), resulting in the hypermodified nucleoside queuosine (7-(((4,5-cis-dihydroxy-2-cyclopenten-1-yl)amino)methyl)-7-deazaguanosine). In Homo sapiens (Human), this protein is Queuine tRNA-ribosyltransferase accessory subunit 2.